Reading from the N-terminus, the 499-residue chain is Alpha-amylase B (499 aa).

The N-terminal stretch at 1-21 (MMVAWWSLFLYGLQVAAPALA) is a signal peptide. A disulfide bond links Cys-51 and Cys-59. Residues Gln-56 and Trp-104 each coordinate substrate. Residue Asn-142 coordinates Ca(2+). His-143 is a substrate binding site. An intrachain disulfide couples Cys-171 to Cys-185. Ca(2+)-binding residues include Glu-183 and Asp-196. N-linked (GlcNAc...) asparagine glycosylation is present at Asn-218. Arg-225 lines the substrate pocket. The Ca(2+) site is built by Asp-227, His-231, and Glu-251. Residue Asp-227 is the Nucleophile of the active site. 230–231 (KH) provides a ligand contact to substrate. Glu-251 acts as the Proton donor in catalysis. Gly-255 serves as a coordination point for substrate. An intrachain disulfide couples Cys-261 to Cys-304. Substrate is bound by residues Asp-318 and Arg-365. Cys-461 and Cys-496 are joined by a disulfide.

The protein belongs to the glycosyl hydrolase 13 family. Ca(2+) serves as cofactor.

The catalysed reaction is Endohydrolysis of (1-&gt;4)-alpha-D-glucosidic linkages in polysaccharides containing three or more (1-&gt;4)-alpha-linked D-glucose units.. The polypeptide is Alpha-amylase B (amyB) (Aspergillus awamori (Black koji mold)).